Reading from the N-terminus, the 322-residue chain is Breast cancer metastasis-suppressor 1-like protein (322 aa).

The segment covering 1–16 (MPVHSREKKESNHNDM) has biased composition (basic and acidic residues). The tract at residues 1–56 (MPVHSREKKESNHNDMEVDYPENEGTSSEEDDSDSSSGSEEGDSSEMDDEDCERRR) is disordered. A compositionally biased stretch (acidic residues) spans 17–51 (EVDYPENEGTSSEEDDSDSSSGSEEGDSSEMDDED). 2 coiled-coil regions span residues 50–82 (EDCE…KERL) and 147–178 (EKLL…ITSE).

It belongs to the BRMS1 family.

The protein resides in the nucleus. Its function is as follows. Involved in the histone deacetylase (HDAC1)-dependent transcriptional repression activity. This is Breast cancer metastasis-suppressor 1-like protein (brms1l) from Xenopus tropicalis (Western clawed frog).